The primary structure comprises 287 residues: Light-independent protochlorophyllide reductase iron-sulfur ATP-binding protein (287 aa).

ATP is bound by residues 10–15 and lysine 39; that span reads GIGKST. Serine 14 is a binding site for Mg(2+). Residues cysteine 95 and cysteine 129 each coordinate [4Fe-4S] cluster. 180 to 181 is a binding site for ATP; sequence NR.

It belongs to the NifH/BchL/ChlL family. As to quaternary structure, homodimer. Protochlorophyllide reductase is composed of three subunits; ChlL, ChlN and ChlB. It depends on [4Fe-4S] cluster as a cofactor.

Its subcellular location is the plastid. It is found in the chloroplast. The catalysed reaction is chlorophyllide a + oxidized 2[4Fe-4S]-[ferredoxin] + 2 ADP + 2 phosphate = protochlorophyllide a + reduced 2[4Fe-4S]-[ferredoxin] + 2 ATP + 2 H2O. It functions in the pathway porphyrin-containing compound metabolism; chlorophyll biosynthesis (light-independent). Component of the dark-operative protochlorophyllide reductase (DPOR) that uses Mg-ATP and reduced ferredoxin to reduce ring D of protochlorophyllide (Pchlide) to form chlorophyllide a (Chlide). This reaction is light-independent. The L component serves as a unique electron donor to the NB-component of the complex, and binds Mg-ATP. The sequence is that of Light-independent protochlorophyllide reductase iron-sulfur ATP-binding protein from Nephroselmis olivacea (Green alga).